The following is a 140-amino-acid chain: FLYWCH family member 2 (140 aa).

Disordered regions lie at residues 1–39 (MPLPEPSEQEGESVKAGQEPSSKPGTEVVPAAPRKPREF) and 83–140 (THPE…GKSL). Serine 21 is subject to Phosphoserine. A compositionally biased stretch (basic and acidic residues) spans 98 to 114 (PEQKRSRQDPGADRTED). The segment covering 118–127 (AAGPPEAAGE) has biased composition (low complexity).

The sequence is that of FLYWCH family member 2 (FLYWCH2) from Pongo abelii (Sumatran orangutan).